The sequence spans 262 residues: 5'-nucleotidase SurE (262 aa).

A divalent metal cation-binding residues include D8, D9, S41, and N97.

The protein belongs to the SurE nucleotidase family. The cofactor is a divalent metal cation.

The protein localises to the cytoplasm. It catalyses the reaction a ribonucleoside 5'-phosphate + H2O = a ribonucleoside + phosphate. Nucleotidase that shows phosphatase activity on nucleoside 5'-monophosphates. The sequence is that of 5'-nucleotidase SurE from Methanococcus maripaludis (strain DSM 14266 / JCM 13030 / NBRC 101832 / S2 / LL).